Reading from the N-terminus, the 124-residue chain is Protein MGF 110-8L (124 aa).

The N-terminal stretch at 1-16 (MKVLILVLLGVVILQA) is a signal peptide. N-linked (GlcNAc...) asparagine; by host glycosylation is found at asparagine 76 and asparagine 94.

Belongs to the asfivirus MGF 110 family.

In terms of biological role, plays a role in virus cell tropism, and may be required for efficient virus replication in macrophages. The polypeptide is Protein MGF 110-8L (Ornithodoros (relapsing fever ticks)).